The sequence spans 360 residues: Protein RecA (360 aa).

69-76 lines the ATP pocket; sequence GPESSGKT.

This sequence belongs to the RecA family.

The protein resides in the cytoplasm. Can catalyze the hydrolysis of ATP in the presence of single-stranded DNA, the ATP-dependent uptake of single-stranded DNA by duplex DNA, and the ATP-dependent hybridization of homologous single-stranded DNAs. It interacts with LexA causing its activation and leading to its autocatalytic cleavage. The polypeptide is Protein RecA (Trichodesmium erythraeum (strain IMS101)).